Reading from the N-terminus, the 276-residue chain is Triple specificity protein phosphatase PtpB (276 aa).

Catalysis depends on Cys-160, which acts as the Phosphocysteine intermediate. The UIM-like region stretch occupies residues 232 to 250; that stretch reads LGVRAEYLAAARQTIDETY.

Belongs to the protein-tyrosine phosphatase family. Interacts (via UIM-like region) with host ubiquitin; activating the phosphatidylinositol phosphate phosphatase activity.

It localises to the secreted. Its subcellular location is the host cytoplasm. The protein resides in the host cell membrane. It catalyses the reaction O-phospho-L-tyrosyl-[protein] + H2O = L-tyrosyl-[protein] + phosphate. The catalysed reaction is O-phospho-L-seryl-[protein] + H2O = L-seryl-[protein] + phosphate. The enzyme catalyses O-phospho-L-threonyl-[protein] + H2O = L-threonyl-[protein] + phosphate. It carries out the reaction 1,2-dioctanoyl-sn-glycero-3-phospho-(1-D-myo-inositol-3-phosphate) + H2O = 1,2-dioctanoyl-sn-glycero-3-phospho-(1D-myo-inositol) + phosphate. It catalyses the reaction 1,2-dioctanoyl-sn-glycero-3-phospho-(1-D-myo-inositol-4-phosphate) + H2O = 1,2-dioctanoyl-sn-glycero-3-phospho-(1D-myo-inositol) + phosphate. The catalysed reaction is 1,2-dioctanoyl-sn-glycero-3-phospho-(1D-myo-inositol-5-phosphate) + H2O = 1,2-dioctanoyl-sn-glycero-3-phospho-(1D-myo-inositol) + phosphate. Its activity is regulated as follows. Binding to host ubiquitin is required to activate the phosphatidylinositol phosphate phosphatase activity. Phosphatase activity is inhibited by sodium orthovanadate, a specific inhibitor of tyrosine phosphatases, but not by okadaic acid, an inhibitor of serine/threonine phosphatases. Inhibition of the enzyme reduces mycobacterial survival in infected macrophages. Inhibitors also enhance killing efficacy by first-line antibiotics. Essential virulence factor that promotes mycobacterial survival within host macrophages. Acts as a phosphatase that possesses triple substrate specificity toward phosphotyrosine, phosphoserine/threonine and phosphoinositides. Supports mycobacteria survival during infection by modulating the normal host signaling pathways, attenuating the bactericidal immune responses and promoting the host cell survival. Inhibits host pyroptosis by disrupting the membrane localization of host gasdermin-D (GSDMD): acts by catalyzing dephosphorylation of phosphatidylinositol (4,5)-bisphosphate and phosphatidylinositol 4-phosphate, thereby inhibiting the membrane targeting of GSDMD and subsequent cytokine release and pyroptosis. Inhibits host inflammatory responses and apoptosis through impeding the NF-kappa-B and MAPK signal pathways and TP53/p53 expression in the macrophage. Blocks the IL6/IL-6 production by down-regulating ERK1/2, p38 and p65 activity. Prevents macrophage cell death by activating the Akt pathway and blocking caspase 3 activity. Reduces the expression of iNOS in activated macrophages and inhibits the generation of destroying reactive nitrogen intermediate NO. This is Triple specificity protein phosphatase PtpB from Mycobacterium tuberculosis (strain ATCC 25618 / H37Rv).